The sequence spans 81 residues: Acyl carrier protein (81 aa).

The 76-residue stretch at 4 to 79 (QEIFEKVQTI…QAVDFISQKV (76 aa)) folds into the Carrier domain. At serine 39 the chain carries O-(pantetheine 4'-phosphoryl)serine.

This sequence belongs to the acyl carrier protein (ACP) family. In terms of processing, 4'-phosphopantetheine is transferred from CoA to a specific serine of apo-ACP by AcpS. This modification is essential for activity because fatty acids are bound in thioester linkage to the sulfhydryl of the prosthetic group.

It is found in the plastid. It localises to the chloroplast. It participates in lipid metabolism; fatty acid biosynthesis. In terms of biological role, carrier of the growing fatty acid chain in fatty acid biosynthesis. The protein is Acyl carrier protein of Guillardia theta (Cryptophyte).